A 426-amino-acid polypeptide reads, in one-letter code: Enolase (426 aa).

Gln163 is a binding site for (2R)-2-phosphoglycerate. Glu205 acts as the Proton donor in catalysis. 3 residues coordinate Mg(2+): Asp242, Glu285, and Asp312. Residues Lys337, Arg366, Ser367, and Lys388 each coordinate (2R)-2-phosphoglycerate. The Proton acceptor role is filled by Lys337.

The protein belongs to the enolase family. Mg(2+) serves as cofactor.

The protein localises to the cytoplasm. The protein resides in the secreted. Its subcellular location is the cell surface. The catalysed reaction is (2R)-2-phosphoglycerate = phosphoenolpyruvate + H2O. Its pathway is carbohydrate degradation; glycolysis; pyruvate from D-glyceraldehyde 3-phosphate: step 4/5. Catalyzes the reversible conversion of 2-phosphoglycerate (2-PG) into phosphoenolpyruvate (PEP). It is essential for the degradation of carbohydrates via glycolysis. The sequence is that of Enolase from Rhodospirillum centenum (strain ATCC 51521 / SW).